We begin with the raw amino-acid sequence, 180 residues long: Ribosome-recycling factor (180 aa).

Belongs to the RRF family.

It localises to the cytoplasm. Responsible for the release of ribosomes from messenger RNA at the termination of protein biosynthesis. May increase the efficiency of translation by recycling ribosomes from one round of translation to another. The sequence is that of Ribosome-recycling factor from Chlamydia felis (strain Fe/C-56) (Chlamydophila felis).